The chain runs to 311 residues: Porphobilinogen deaminase (311 aa).

Residue cysteine 242 is modified to S-(dipyrrolylmethanemethyl)cysteine.

This sequence belongs to the HMBS family. In terms of assembly, monomer. Dipyrromethane is required as a cofactor.

It carries out the reaction 4 porphobilinogen + H2O = hydroxymethylbilane + 4 NH4(+). The protein operates within porphyrin-containing compound metabolism; protoporphyrin-IX biosynthesis; coproporphyrinogen-III from 5-aminolevulinate: step 2/4. In terms of biological role, tetrapolymerization of the monopyrrole PBG into the hydroxymethylbilane pre-uroporphyrinogen in several discrete steps. In Neisseria meningitidis serogroup A / serotype 4A (strain DSM 15465 / Z2491), this protein is Porphobilinogen deaminase (hemC).